The chain runs to 215 residues: Putative glycosyltransferase ALG1L2 (215 aa).

Residues 40-66 are disordered; the sequence is PFRARSEPEDPDTERSAFTERDSGSGL. Basic and acidic residues predominate over residues 43–62; that stretch reads ARSEPEDPDTERSAFTERDS.

This sequence belongs to the glycosyltransferase group 1 family.

In terms of biological role, putative glycosyltransferase. The sequence is that of Putative glycosyltransferase ALG1L2 (ALG1L2) from Homo sapiens (Human).